The sequence spans 882 residues: Liprin-beta-2 (882 aa).

The stretch at 101–303 (AASNETYQER…DKDRRIEELT (203 aa)) forms a coiled coil. 3 positions are modified to phosphoserine: Ser-328, Ser-362, and Ser-386. The disordered stretch occupies residues 339 to 554 (RKWNTTNKSP…SRTRDTKGQK (216 aa)). Basic and acidic residues predominate over residues 388 to 399 (EDLRRESGDKCV). 2 stretches are compositionally biased toward polar residues: residues 442 to 457 (PTASLQPDSSGSSQPK) and 481 to 495 (SSASSGTESSPQSPV). A phosphoserine mark is found at Ser-502 and Ser-518. Over residues 502 to 515 (SPKGIKKFWGKIRR) the composition is skewed to basic residues. 3 SAM domains span residues 564 to 628 (WSTE…INAK), 636 to 699 (LDHI…LHVN), and 724 to 789 (WSNH…KFNA).

This sequence belongs to the liprin family. Liprin-beta subfamily. As to quaternary structure, forms homodimers and heterodimers. In terms of tissue distribution, expressed widely. Strong expression in liver, kidney, intestine, heart, lung and testis. Low expression in brain and thymus.

Functionally, may regulate the disassembly of focal adhesions. Did not bind receptor-like tyrosine phosphatases type 2A. The sequence is that of Liprin-beta-2 (Ppfibp2) from Mus musculus (Mouse).